A 146-amino-acid polypeptide reads, in one-letter code: Protein phosphatase 1 regulatory subunit 14D (146 aa).

The segment covering 1–16 (MLSSSAASCTSPNPDT) has biased composition (polar residues). Positions 1–57 (MLSSSAASCTSPNPDTDNPDKKVRWSSEKRRRASSTDSESKTHLDISKLPRSRRPSR) are disordered. Composition is skewed to basic and acidic residues over residues 18-28 (NPDKKVRWSSE) and 38-48 (SESKTHLDISK). The tract at residues 21 to 25 (KKVRW) is interaction with protein phosphatase 1.

Belongs to the PP1 inhibitor family. Post-translationally, phosphorylated on several residues.

Its subcellular location is the cytoplasm. Inhibitor of PPP1CA. Has inhibitory activity only when phosphorylated, creating a molecular switch for regulating the phosphorylation status of PPP1CA substrates and smooth muscle contraction. The protein is Protein phosphatase 1 regulatory subunit 14D (Ppp1r14d) of Rattus norvegicus (Rat).